Here is a 446-residue protein sequence, read N- to C-terminus: Mannan endo-1,6-alpha-mannosidase DCW1 (446 aa).

Positions methionine 1–glycine 18 are cleaved as a signal peptide. Residues asparagine 31, asparagine 81, asparagine 106, asparagine 200, asparagine 222, asparagine 237, asparagine 262, asparagine 278, asparagine 285, asparagine 334, asparagine 391, and asparagine 397 are each glycosylated (N-linked (GlcNAc...) asparagine). Residues proline 389–proline 408 are disordered. Serine 422 carries GPI-anchor amidated serine lipidation. A propeptide spans arginine 423–tyrosine 446 (removed in mature form).

This sequence belongs to the glycosyl hydrolase 76 family.

The protein resides in the secreted. Its subcellular location is the cell wall. The protein localises to the cell membrane. The enzyme catalyses Random hydrolysis of (1-&gt;6)-alpha-D-mannosidic linkages in unbranched (1-&gt;6)-mannans.. Functionally, required for normal synthesis of the cell wall. This Candida glabrata (strain ATCC 2001 / BCRC 20586 / JCM 3761 / NBRC 0622 / NRRL Y-65 / CBS 138) (Yeast) protein is Mannan endo-1,6-alpha-mannosidase DCW1 (DCW1).